Here is a 994-residue protein sequence, read N- to C-terminus: MKNFYYFILILLFFNEVCYSLKDGEIKLHLIPHSHCDSGWTSTMNEYYMGQVKSIISSMVQSLNVESNPPRKFVWSEIGFLEQWWDDMPIEIKNDFIKHVKNDRIEFVNGGWVMNDEACASLESVIRQLSNGHKFIREKFGKQPESGWQIDPFGHSSLTPTLQAQFGYKHVVLNRIHYELKKKFKEEKNLQFKWRGSPEGVGPKSDILAHVFDDFYTSPPHMSFDGYNFLAYGLPRLTMEMIELARNRSVFYKSPHVLIPMGGDFAFKNAYKSFEQMDQLVASINGQHANGESNVICQYSTLADFFSDTINWHNENKVSFNYYDSDFFPYADDSNTYWTGYYTSRPLLKGYERHVSSKLRSAEILSALQNDEKYYPNQLLNASKQVSILQHHDAISGTSKKHVVQDYFSRLQKADILVSEQSEKLLASALSQHSPTKLDIIDIGGSLNFPKNNDAISFILFNQLSWSKEELISIKVQSVGDHGESLNSPTNNACPYVLAQEDFLNEIEIDCSPRSDFKSDQSDDHKEFIQIDFPAKLKPFSSKLYYLKRKSNPNKSNWVLPKTNHFNSIENSIYTANLDENYLIKSLKSKSSRHGGGANQITEINQQLLTYSDIGGAYIFRTNKQVFQPPRQVYSTFTYIGKFYQEAQSILQDTHQISNRNGYYYYYGNNQQQQQQQQTISTFNYNSIKLINTGNEMIDKKINFNFHIRGINGTTTINRFTTDIDNNRELYSDNGLEMMHRKSISSQSVEVGRETQSYYPTINSVYIESQSTGKRFVCNNDRSRGVSSQGQGCLEMALHRSLTYEDGKGLEIPAIDESSINARFECYLDEVPSNSQQSNGGGGGDDIRKQSINYQHKFQIYQGQDSSYMSSKSFMLKPLPEFIHILSMERSGPRSIKLRIHNIENNNQSPITFDLNGLFSFIKSIKSIKEYNLSLINRFVDNNIDNIISSHRSIVGKNLFPIKDTPTRFNPINTKQTKITLYPSEIKAIEITYH.

The signal sequence occupies residues 1–20; sequence MKNFYYFILILLFFNEVCYS. Residues His35, Asp37, and Asp151 each contribute to the Zn(2+) site. The active-site Nucleophile is Asp151. Residues Asn247 and Asn381 are each glycosylated (N-linked (GlcNAc...) asparagine). Zn(2+) is bound at residue His392. N-linked (GlcNAc...) asparagine glycosylation is found at Asn554, Asn712, and Asn932.

It belongs to the glycosyl hydrolase 38 family. It depends on Zn(2+) as a cofactor.

The protein localises to the secreted. It catalyses the reaction Hydrolysis of terminal, non-reducing alpha-D-mannose residues in alpha-D-mannosides.. The chain is Alpha-mannosidase F (manF) from Dictyostelium discoideum (Social amoeba).